A 228-amino-acid chain; its full sequence is UPF0758 protein NT01CX_1687 (228 aa).

In terms of domain architecture, MPN spans 106–228 (IIKSPGDVAG…YISLKEKNIL (123 aa)). H177, H179, and D190 together coordinate Zn(2+). The JAMM motif motif lies at 177-190 (HNHPSGDPTPSSED).

The protein belongs to the UPF0758 family.

This chain is UPF0758 protein NT01CX_1687, found in Clostridium novyi (strain NT).